Reading from the N-terminus, the 478-residue chain is Lysosome membrane protein 2 (478 aa).

The Cytoplasmic portion of the chain corresponds to 1-4; sequence MGRC. A helical transmembrane segment spans residues 5 to 27; the sequence is CFYTAGTLSLLLLVTSVTLLVAR. Topologically, residues 28–433 are lumenal; sequence VFQKAVDQSI…RLKSMINTTL (406 aa). N-linked (GlcNAc...) asparagine glycosylation is found at N45, N68, and N105. Residues 155–191 are important for interaction with GBA1; that stretch reads IIEAMLKAYQQKLFVTHTVDELLWGYKDEILSLIHVF. 4 N-linked (GlcNAc...) asparagine glycosylation sites follow: N206, N224, N249, and N304. Intrachain disulfides connect C274–C329 and C312–C318. N325, N412, and N430 each carry an N-linked (GlcNAc...) asparagine glycan. Residues 434-459 form a helical membrane-spanning segment; the sequence is IITNIPYIIMALGVFFGLVFTWLACK. The Cytoplasmic segment spans residues 460–478; it reads GQGSMDEGTADERAPLIRT.

Belongs to the CD36 family. As to quaternary structure, interacts with GBA1. In terms of assembly, (Microbial infection) Interacts with enterovirus 71 capsid proteins VP1 and VP2.

The protein resides in the lysosome membrane. Functionally, acts as a lysosomal receptor for glucosylceramidase (GBA1) targeting. Its function is as follows. (Microbial infection) Acts as a receptor for enterovirus 71. The polypeptide is Lysosome membrane protein 2 (SCARB2) (Homo sapiens (Human)).